The sequence spans 405 residues: Deoxyguanosinetriphosphate triphosphohydrolase-like protein (405 aa).

The region spanning 75–219 is the HD domain; it reads RLTHTIEVAQ…AAIADDIAYN (145 aa).

Belongs to the dGTPase family. Type 2 subfamily.

In Agrobacterium fabrum (strain C58 / ATCC 33970) (Agrobacterium tumefaciens (strain C58)), this protein is Deoxyguanosinetriphosphate triphosphohydrolase-like protein.